Consider the following 255-residue polypeptide: MNDYIVVKCGGSMLDQLNDVFFDCIKKLQQQYKVVIVHGGGPEIDAKLKDCNINVEKRDGLRVTPKEVMDVVQMVLCGSTNKKLVMNLQKHNLLAVGCSGCDGNLLQVQPVSGEIGYVGEVSYVETALLKGLINMNYIPVIAPVGINDNEIYNINADTAAAGIAAALSAKELIFITDVDGVLHEGKLVKKTDESEIATFIEKGVITGGMIPKVQAALASLKMGVQKISIVNGTKDFTEVTGECIGTTVTKGVSIV.

Residues 40 to 41 (GG), R62, and N153 contribute to the substrate site.

It belongs to the acetylglutamate kinase family. ArgB subfamily.

The protein resides in the cytoplasm. The catalysed reaction is N-acetyl-L-glutamate + ATP = N-acetyl-L-glutamyl 5-phosphate + ADP. It participates in amino-acid biosynthesis; L-arginine biosynthesis; N(2)-acetyl-L-ornithine from L-glutamate: step 2/4. Its function is as follows. Catalyzes the ATP-dependent phosphorylation of N-acetyl-L-glutamate. In Bacillus thuringiensis (strain Al Hakam), this protein is Acetylglutamate kinase.